A 98-amino-acid chain; its full sequence is Large ribosomal subunit protein uL23 (98 aa).

It belongs to the universal ribosomal protein uL23 family. Part of the 50S ribosomal subunit. Contacts protein L29, and trigger factor when it is bound to the ribosome.

One of the early assembly proteins it binds 23S rRNA. One of the proteins that surrounds the polypeptide exit tunnel on the outside of the ribosome. Forms the main docking site for trigger factor binding to the ribosome. This Lactobacillus gasseri (strain ATCC 33323 / DSM 20243 / BCRC 14619 / CIP 102991 / JCM 1131 / KCTC 3163 / NCIMB 11718 / NCTC 13722 / AM63) protein is Large ribosomal subunit protein uL23.